The sequence spans 248 residues: Probable aquaporin TIP2-1 (248 aa).

Transmembrane regions (helical) follow at residues Ala-20–Ile-40 and Ala-54–Ala-74. Residues Asn-83–Ala-85 carry the NPA 1 motif. The next 3 membrane-spanning stretches (helical) occupy residues Thr-97–Leu-119, Gly-141–Ala-161, and Leu-168–Gly-188. Residues Asn-196–Ala-198 carry the NPA 2 motif. A helical transmembrane segment spans residues Trp-217 to Gly-237.

The protein belongs to the MIP/aquaporin (TC 1.A.8) family. TIP (TC 1.A.8.10) subfamily. As to expression, expressed in roots and anthers.

It is found in the vacuole membrane. Functionally, aquaporins facilitate the transport of water and small neutral solutes across cell membranes. May be involved in transport from the vacuolar compartment to the cytoplasm. The sequence is that of Probable aquaporin TIP2-1 (TIP2-1) from Oryza sativa subsp. japonica (Rice).